Reading from the N-terminus, the 395-residue chain is Acetyl-CoA acetyltransferase (395 aa).

Cys-90 serves as the catalytic Acyl-thioester intermediate. Tyr-185 and Lys-230 together coordinate CoA. Residue Tyr-185 participates in K(+) binding. Positions 246, 247, and 249 each coordinate K(+). Residue Ser-250 coordinates CoA. Val-347 is a K(+) binding site. Catalysis depends on proton acceptor residues His-351 and Cys-381.

Belongs to the thiolase-like superfamily. Thiolase family. Homotetramer.

The protein localises to the cytoplasm. The catalysed reaction is 2 acetyl-CoA = acetoacetyl-CoA + CoA. It functions in the pathway metabolic intermediate biosynthesis; (R)-mevalonate biosynthesis; (R)-mevalonate from acetyl-CoA: step 1/3. Its function is as follows. Acetyl-CoA acetyltransferase; part of the first module of ergosterol biosynthesis pathway that includes the early steps of the pathway, conserved across all eukaryotes, and which results in the formation of mevalonate from acetyl-coenzyme A (acetyl-CoA). Erg10 catalyzes the formation of acetoacetyl-CoA from acetyl-CoA. The first module starts with the action of the cytosolic acetyl-CoA acetyltransferase eg10 that catalyzes the formation of acetoacetyl-CoA. The hydroxymethylglutaryl-CoA synthases erg13 then condenses acetyl-CoA with acetoacetyl-CoA to form HMG-CoA. The rate-limiting step of the early module is the reduction to mevalonate by the 3-hydroxy-3-methylglutaryl-coenzyme A (HMG-CoA) reductases hcs1. This chain is Acetyl-CoA acetyltransferase (erg10), found in Schizosaccharomyces pombe (strain 972 / ATCC 24843) (Fission yeast).